Here is a 156-residue protein sequence, read N- to C-terminus: RNA polymerase sigma factor SigS (156 aa).

The Polymerase core binding motif lies at 29 to 44 (EYYQLLLIKMWQLSQI). A DNA-binding region (H-T-H motif) is located at residues 126–145 (QFEIAEIMSLSLSTIKLIKM).

It belongs to the sigma-70 factor family.

Sigma factors are initiation factors that promote the attachment of RNA polymerase to specific initiation sites and are then released. Sigma-S contributes to the protection against external stress, thus playing a role in cellular fitness and survival. This Staphylococcus aureus (strain NCTC 8325 / PS 47) protein is RNA polymerase sigma factor SigS (sigS).